The following is a 379-amino-acid chain: Homoserine O-acetyltransferase (379 aa).

The 305-residue stretch at 52–356 (NVVVVLHALT…VYGHDGFLVE (305 aa)) folds into the AB hydrolase-1 domain. The active-site Nucleophile is the S157. R227 serves as a coordination point for substrate. Residues D320 and H350 contribute to the active site. Position 351 (D351) interacts with substrate.

The protein belongs to the AB hydrolase superfamily. MetX family. Homodimer.

It is found in the cytoplasm. It carries out the reaction L-homoserine + acetyl-CoA = O-acetyl-L-homoserine + CoA. Its pathway is amino-acid biosynthesis; L-methionine biosynthesis via de novo pathway; O-acetyl-L-homoserine from L-homoserine: step 1/1. Transfers an acetyl group from acetyl-CoA to L-homoserine, forming acetyl-L-homoserine. In Mycobacterium bovis (strain ATCC BAA-935 / AF2122/97), this protein is Homoserine O-acetyltransferase.